The following is a 147-amino-acid chain: Hemoglobin subunit gamma (147 aa).

The 145-residue stretch at 3–147 folds into the Globin domain; the sequence is HFTAEEKAAI…VATALAHKYH (145 aa). The heme b site is built by H64 and H93.

This sequence belongs to the globin family. In terms of assembly, heterotetramer of two alpha chains and two gamma chains. In terms of tissue distribution, red blood cells.

This protein functions as an embryonic globin, but the gene structure and chromosomal location resemble more closely the human gamma chain gene, which codes for a fetal globin. In Oryctolagus cuniculus (Rabbit), this protein is Hemoglobin subunit gamma (HBG).